The sequence spans 253 residues: MPNRTVPTLEELLTLNKVQQTLRLTEVNQHLESLTAQERVVWGLENLQGNHALSSSFGIQAAVMLHLLTSVKSDIPVVLTDTGYLFPETYQFIDELTERLNLNLKVYSAPVSAAWQEARYGKLWEQGVEGIERYNQINKVEPMRRALDELNIGTWFSGLRREQSQSRASLPILSVQNGVFKFLPVIDWTNKEVHYYLKDNDLPYHPLWEQGYLSVGDTHTTQKWQPGMNEEQTRFFGLKRECGLHEDHNDTHQ.

The Nucleophile; cysteine thiosulfonate intermediate role is filled by cysteine 242.

The protein belongs to the PAPS reductase family. CysH subfamily.

The protein resides in the cytoplasm. The enzyme catalyses [thioredoxin]-disulfide + sulfite + adenosine 3',5'-bisphosphate + 2 H(+) = [thioredoxin]-dithiol + 3'-phosphoadenylyl sulfate. Its pathway is sulfur metabolism; hydrogen sulfide biosynthesis; sulfite from sulfate: step 3/3. Catalyzes the formation of sulfite from phosphoadenosine 5'-phosphosulfate (PAPS) using thioredoxin as an electron donor. This chain is Phosphoadenosine 5'-phosphosulfate reductase, found in Vibrio cholerae serotype O1 (strain ATCC 39541 / Classical Ogawa 395 / O395).